A 424-amino-acid polypeptide reads, in one-letter code: Endo-beta-1,4-galactanase (424 aa).

The signal sequence occupies residues 1–26 (MKNVLAVFVVLIFVLGAFGTSGPAEA). Residue 142–145 (DPAK) coordinates substrate. The Proton donor role is filled by E190. Residues 229–230 (TN) and H263 contribute to the substrate site. The active-site Nucleophile is E288. Substrate is bound at residue T292. Ca(2+) is bound by residues D297, D299, H301, and N303. Positions 307 and 384 each coordinate substrate. Residues S392 and D395 each contribute to the Ca(2+) site.

It belongs to the glycosyl hydrolase 53 family. Ca(2+) is required as a cofactor.

The enzyme catalyses The enzyme specifically hydrolyzes (1-&gt;4)-beta-D-galactosidic linkages in type I arabinogalactans.. Functionally, involved in galactan degradation. Degrades arabinose-free galactan to galactooligosaccharides, producing galactotetraose as the main product along with galactotriose, galactobiose, and galactose. May hydrolyze the beta-1,4-galactan linkages of the galactan portion of arabinogalactan type I, a pectic plant polysaccharide from which most of the arabinose has been removed. The chain is Endo-beta-1,4-galactanase (ganB) from Bacillus licheniformis (strain ATCC 14580 / DSM 13 / JCM 2505 / CCUG 7422 / NBRC 12200 / NCIMB 9375 / NCTC 10341 / NRRL NRS-1264 / Gibson 46).